Here is a 678-residue protein sequence, read N- to C-terminus: Protein CASP (678 aa).

The Cytoplasmic portion of the chain corresponds to 1-619 (MAANVGSMFQ…LVLSNKMART (619 aa)). Coiled-coil stretches lie at residues 67 to 450 (LLKS…QDLS) and 502 to 556 (LSII…FLQS). S586 is subject to Phosphoserine. The chain crosses the membrane as a helical; Anchor for type IV membrane protein span at residues 620-640 (IGFFYTLFLHCLVFLVLYKLA). The Lumenal segment spans residues 641–678 (WSESMERDCATFCAKKFADHLHKFHENDNGAAAGDLWQ).

The protein belongs to the CASP family. In terms of assembly, homodimer; disulfide-linked. Interacts with GOLGA5.

It is found in the golgi apparatus membrane. May be involved in intra-Golgi retrograde transport. This Pongo abelii (Sumatran orangutan) protein is Protein CASP (CUTL1).